The sequence spans 309 residues: MRENNQSSTLEFILLGVTGQQEQEDFFYILFLFIYPITLIGNLLIVLAICSDVHLHNPMYFLLANLSLVDIFFSSVTIPKMLANHLSGSKSISFGGCLTQMYFMIDLGNTDSYTLAAMAYDRAVAISRPLHYTTIMSPRSCIWLIAGSWVIGNANALPHTLLTASLSFCGNQEVANFYCDITPLLKLSCSDIHFHVKMMYLGVGIFSVPLLCIIVSYIRVFSTVFQVPSTKGVLKAFSTCGSHLTVVSLYYGTVMGMYFRPLTNYSLKDAVITVMCTAVTPMLNPFIYSLRNRDMKAALQKLFNKRISS.

Over M1–D25 the chain is Extracellular. The N-linked (GlcNAc...) asparagine glycan is linked to N5. A helical membrane pass occupies residues F26 to I49. Residues C50–N57 are Cytoplasmic-facing. The helical transmembrane segment at P58 to P79 threads the bilayer. The Extracellular portion of the chain corresponds to K80–Q100. The cysteines at positions 97 and 189 are disulfide-linked. Residues M101–Y120 form a helical membrane-spanning segment. Residues D121 to R139 lie on the Cytoplasmic side of the membrane. Residues S140–P158 traverse the membrane as a helical segment. Over H159–H195 the chain is Extracellular. A helical membrane pass occupies residues V196–I218. At R219–K235 the chain is on the cytoplasmic side. The helical transmembrane segment at A236–Y258 threads the bilayer. Topologically, residues F259–A270 are extracellular. An N-linked (GlcNAc...) asparagine glycan is attached at N264. The helical transmembrane segment at V271 to L290 threads the bilayer. Residues R291–S309 are Cytoplasmic-facing.

Belongs to the G-protein coupled receptor 1 family.

It localises to the cell membrane. Its function is as follows. Odorant receptor. The protein is Olfactory receptor 1A1 (OR1A1) of Gorilla gorilla gorilla (Western lowland gorilla).